A 319-amino-acid chain; its full sequence is Phosphoenolpyruvate transferase (319 aa).

Residue aspartate 50 participates in 7,8-didemethyl-8-hydroxy-5-deazariboflavin binding.

It belongs to the CofD family. As to quaternary structure, homodimer. The cofactor is Mg(2+).

The enzyme catalyses enolpyruvoyl-2-diphospho-5'-guanosine + 7,8-didemethyl-8-hydroxy-5-deazariboflavin = dehydro coenzyme F420-0 + GMP + H(+). It functions in the pathway cofactor biosynthesis; coenzyme F420 biosynthesis. Its function is as follows. Catalyzes the transfer of the phosphoenolpyruvate moiety from enoylpyruvoyl-2-diphospho-5'-guanosine (EPPG) to 7,8-didemethyl-8-hydroxy-5-deazariboflavin (FO) with the formation of dehydro coenzyme F420-0 and GMP. This Streptomyces coelicolor (strain ATCC BAA-471 / A3(2) / M145) protein is Phosphoenolpyruvate transferase.